Consider the following 590-residue polypeptide: Potassium-transporting ATPase potassium-binding subunit (590 aa).

Helical transmembrane passes span 11–31 (IFIA…AAVF), 64–84 (TAYC…TYLI), 136–156 (GLAT…IAFI), 178–198 (ILWV…SQGV), 273–293 (MLEM…LGQM), 301–321 (WAVL…CYWA), 403–423 (AGLY…GLMV), 442–462 (AMLY…VAVL), 511–531 (LGFA…ALAG), and 552–572 (LFTV…FLPA).

This sequence belongs to the KdpA family. As to quaternary structure, the system is composed of three essential subunits: KdpA, KdpB and KdpC.

It localises to the cell inner membrane. Functionally, part of the high-affinity ATP-driven potassium transport (or Kdp) system, which catalyzes the hydrolysis of ATP coupled with the electrogenic transport of potassium into the cytoplasm. This subunit binds the periplasmic potassium ions and delivers the ions to the membrane domain of KdpB through an intramembrane tunnel. This chain is Potassium-transporting ATPase potassium-binding subunit, found in Acidobacterium capsulatum (strain ATCC 51196 / DSM 11244 / BCRC 80197 / JCM 7670 / NBRC 15755 / NCIMB 13165 / 161).